Here is a 275-residue protein sequence, read N- to C-terminus: 2,3,4,5-tetrahydropyridine-2,6-dicarboxylate N-succinyltransferase (275 aa).

2 residues coordinate substrate: Arg106 and Asp143.

This sequence belongs to the transferase hexapeptide repeat family. Homotrimer.

The protein resides in the cytoplasm. The enzyme catalyses (S)-2,3,4,5-tetrahydrodipicolinate + succinyl-CoA + H2O = (S)-2-succinylamino-6-oxoheptanedioate + CoA. It functions in the pathway amino-acid biosynthesis; L-lysine biosynthesis via DAP pathway; LL-2,6-diaminopimelate from (S)-tetrahydrodipicolinate (succinylase route): step 1/3. This is 2,3,4,5-tetrahydropyridine-2,6-dicarboxylate N-succinyltransferase from Paraburkholderia xenovorans (strain LB400).